A 376-amino-acid polypeptide reads, in one-letter code: 2-hydroxypropyl-CoM lyase (376 aa).

The Zn(2+) site is built by H218, C220, and C341.

Belongs to the vitamin-B12 independent methionine synthase family. Homohexamer. Component I of the aliphatic epoxide carboxylation complex together with components II, III and IV. Zn(2+) is required as a cofactor.

The catalysed reaction is (R)-2-hydroxypropyl-coenzyme M = (R)-1,2-epoxypropane + coenzyme M. It catalyses the reaction (S)-2-hydroxypropyl-coenzyme M = (S)-1,2-epoxypropane + coenzyme M. It functions in the pathway alkene metabolism; propylene degradation. Its activity is regulated as follows. Inhibited by methylepoxypropane. Inhibited by the zinc chelator 4-(2-pyridylazo)resorcinol (PAR), in the presence of p- (hydroxymercuri)benzenesulfonic acid (PMPS), and by EDTA. Not inhibited by the coenzyme M analog 2-bromoethanesulfonate (BES). In terms of biological role, involved in aliphatic epoxide carboxylation. Catalyzes the addition of coenzyme M (CoM) to either R- or S-epoxypropane to form the thioether conjugate 2-hydroxypropyl-CoM. Catalyzes the reaction of CoM with R-epoxypropane at a rate approximately twice of that with S-epoxypropane. The CoM analogs 2-mercaptopropionate, 2-mercaptoethanol and cysteine substitute poorly for CoM as the thiol substrate. The chain is 2-hydroxypropyl-CoM lyase from Xanthobacter autotrophicus (strain ATCC BAA-1158 / Py2).